A 199-amino-acid chain; its full sequence is Superoxide dismutase [Mn/Fe] 1 (199 aa).

Fe(3+) is bound by residues His-27, His-81, Asp-161, and His-165. The Mn(2+) site is built by His-27, His-81, Asp-161, and His-165.

It belongs to the iron/manganese superoxide dismutase family. In terms of assembly, homodimer. Can also form a heterodimer with SodM. Requires Mn(2+) as cofactor. Fe(3+) is required as a cofactor.

The enzyme catalyses 2 superoxide + 2 H(+) = H2O2 + O2. In terms of biological role, destroys superoxide anion radicals which are normally produced within the cells and which are toxic to biological systems. Catalyzes the dismutation of superoxide anion radicals into O2 and H2O2 by successive reduction and oxidation of the transition metal ion at the active site. This chain is Superoxide dismutase [Mn/Fe] 1 (sodA), found in Staphylococcus aureus (strain USA300).